The following is a 270-amino-acid chain: MNIEIREKDDERAVFVVEGVDDTFINTIRRICLVEIPTLAIEDVNIYKNDAKMFDEVLAHRLGLIPIVTDLDSYVMPSECDCESGCQHCRVSFLLKEKCEEGNDSKIVYSKDLKSDDPAVKPVYDTIPIVRLREGEEVELEAIAELGLGSEHAKWQATTTCGYKYYPKIEIDTEKVNDLEEYVEECPRNVLQIEDDTLVVGNIENCSTCRTCQRLSEKDDNAIVVDFEESKYIFKIETDGSLKPFDVLTIACDILSEKADNIINFVNEEE.

The [3Fe-4S] cluster site is built by C206, C209, and C212.

The protein belongs to the archaeal Rpo3/eukaryotic RPB3 RNA polymerase subunit family. As to quaternary structure, part of the RNA polymerase complex. It depends on [3Fe-4S] cluster as a cofactor.

Its subcellular location is the cytoplasm. The catalysed reaction is RNA(n) + a ribonucleoside 5'-triphosphate = RNA(n+1) + diphosphate. Its function is as follows. DNA-dependent RNA polymerase (RNAP) catalyzes the transcription of DNA into RNA using the four ribonucleoside triphosphates as substrates. This chain is DNA-directed RNA polymerase subunit Rpo3, found in Methanosphaera stadtmanae (strain ATCC 43021 / DSM 3091 / JCM 11832 / MCB-3).